The primary structure comprises 250 residues: MTLLEKTRKLNRILQKTGIQPVDFMEMASILKEVIEANVYILSRKGKVLGYSALKDYGDEIFAKDKAIPEEYNDRLLRVTETLANDKGKLFKEEKALADLIVTVVPINGGGDRLGTLLLIRSTKEFTDDDLIIAEYGATVVGLEILRAKNEEIEEEARKRAVVQMALATLSYSELQAIKNIFEELKGKEGLLVASKIADKVGITRSVIVNALRKFESAGIIESRSLGMKGTHIRVLNEKLLEELEKMKRD.

Residues 1–146 (MTLLEKTRKL…GATVVGLEIL (146 aa)) form a GAF domain region. The segment at residues 194 to 213 (ASKIADKVGITRSVIVNALR) is a DNA-binding region (H-T-H motif).

The protein belongs to the CodY family.

The protein resides in the cytoplasm. In terms of biological role, DNA-binding global transcriptional regulator which is involved in the adaptive response to starvation and acts by directly or indirectly controlling the expression of numerous genes in response to nutrient availability. During rapid exponential growth, CodY is highly active and represses genes whose products allow adaptation to nutrient depletion. The polypeptide is Global transcriptional regulator CodY (Caldanaerobacter subterraneus subsp. tengcongensis (strain DSM 15242 / JCM 11007 / NBRC 100824 / MB4) (Thermoanaerobacter tengcongensis)).